The primary structure comprises 456 residues: MSRIRRFLATALAAATAGVGAIVTAIASAGPAHAYDSPFYVDPQSNAAKWVAANPNDPRTPVIRDRIAAVPTGRWFANYNPSTVRAEVDAYVGAAAAAGKIPIMVVYAMPNRDCGGPSAGGAPNHTAYRAWIDEIAAGLRNRPAVIILEPDALPIMTNCMSPSEQAEVQASAVGAGKKFKAASSQAKVYFDAGHDAWVPADEMASRLRGADIANSADGIALNVSNYRYTSGLISYAKSVLSAIGASHLRAVIDTSRNGNGPLGSEWCDPPGRATGTWSTTDTGDPAIDAFLWIKPPGEADGCIATPGVFVPDRAYELAMNAAPPTYSPSPTPSTPSPSPSQSDPGSPSPSPSQPPAGRACEATYALVNQWPGGFQAEVTVKNTGSSPINGWTVQWTLPSGQSITQLWNGDLSTSGSNVTVRNVSWNGNVPAGGSTSFGFLGSGTGQLSSSITCSAS.

The signal sequence occupies residues Met1–Gly30. The catalytic stretch occupies residues Pro31 to Ala322. The active site involves Asp113. Disulfide bonds link Cys114–Cys159 and Cys267–Cys302. Asp151 serves as the catalytic Proton donor. The segment at Ser255 to Thr280 is disordered. Residue Asp300 is the Nucleophile of the active site. Residues Ala321 to Arg358 are disordered. Residues Pro323–Pro355 form a linker ('hinge') (Pro-Ser box) region. Pro residues predominate over residues Thr325–Ser338. A CBM2 domain is found at Gln353–Ser456. Cys360 and Cys453 are disulfide-bonded.

Belongs to the glycosyl hydrolase 6 (cellulase B) family.

It carries out the reaction Endohydrolysis of (1-&gt;4)-beta-D-glucosidic linkages in cellulose, lichenin and cereal beta-D-glucans.. In Thermobispora bispora (Microbispora bispora), this protein is Endoglucanase A (celA).